Consider the following 589-residue polypeptide: Ubiquilin-1 (589 aa).

Residues 1–11 are compositionally biased toward gly residues; the sequence is MAESGESGGPP. 2 disordered regions span residues 1-35 and 110-145; these read MAES…AEPK and NRPQ…ATSN. Ala2 bears the N-acetylalanine mark. Over residues 12–35 the composition is skewed to low complexity; sequence GSQDSAAGAEGAGAPAAAASAEPK. The region spanning 37 to 111 is the Ubiquitin-like domain; that stretch reads MKVTVKTPKE…VHLVIKTQNR (75 aa). Polar residues predominate over residues 110 to 124; it reads NRPQDHSAQQTNTAG. The span at 125–145 shows a compositional bias: low complexity; sequence SNVTTSSTPNSNSTSGSATSN. The interval 178 to 428 is interaction with UBXN4; that stretch reads QLLSNPEMMV…LNNPLFAGNP (251 aa). STI1 domains are found at residues 182–210 and 212–251; these read NPEM…QLIM and NPQM…MQEM. The tract at residues 295-371 is disordered; that stretch reads PFASLVSNTS…NLVPGVGASM (77 aa). The span at 299-313 shows a compositional bias: polar residues; that stretch reads LVSNTSSGEGSQPSR. Over residues 327–360 the composition is skewed to low complexity; that stretch reads QTSQSSSASSGTASTVGGTTGSTASGTSGQSTTA. STI1 domains lie at 387 to 434 and 438 to 470; these read NPQL…QEQM and LPTF…QQGL. The interval 488–520 is disordered; the sequence is LGALGSTGGSSGTNGSNATPSENTSPTAGTTEP. The segment covering 489–499 has biased composition (gly residues); it reads GALGSTGGSSG. Residues 509 to 520 are compositionally biased toward polar residues; the sequence is ENTSPTAGTTEP. The UBA domain maps to 546–586; the sequence is RFQQQLEQLSAMGFLNREANLQALIATGGDINAAIERLLGS.

As to quaternary structure, monomer and homodimer. Heterodimer with UBQLN2. Binds CD47, NBL1, GABRA1, GABRA2, GABRA3, GABRA6, GABRB1, GABRB2 and GABRB3. Binds UBE3A, BTRC, P4HB and MTOR. Interacts with the proteasome 19S subunit. Interacts (via ubiquitin-like domain) with TREX1; the interaction is direct and may control TREX1 subcellular location. Forms a complex with UBXN4 and VCP. Interacts (via UBA domain) with UBQLN4 (via ubiquitin-like domain). Found in a complex with UBQLN2 and MAP1LC3A/B/C. The monomeric form interacts with PSEN2. The monomeric form interacts with PSEN1. Interacts with ORAI1. Interacts (via UBA domain) with TICAM1. Interacts with EPS15. Interacts (via UBA domain) with UBA52 and (via ubiquitin-like domain) with PSMD3 and PSMD4. Interacts with HERPUD1. Interacts with MAP1LC3A/B/C in the presence of UBQLN4. Interacts (via ubiquitin-like domain) with EPS15 (via UIM domains) and both the ubiquitinated and non-ubiquitinated forms can interact with EPS15. Interacts (via ubiquitin-like domain) with EPS15L1, HGS (via UIM domain) and STAM2 (via UIM domain). Interacts with BCL2L10/BCL-B; in the cytoplasm. In terms of assembly, monomeric form interacts with PSEN1. Post-translationally, degraded during both macroautophagy and during chaperone-mediated autophagy (CMA). In terms of processing, phosphorylated. Ubiquitinated. In terms of tissue distribution, brain (at protein level). Ubiquitous. Highly expressed throughout the brain; detected in neurons and in neuropathological lesions, such as neurofibrillary tangles and Lewy bodies. Highly expressed in heart, placenta, pancreas, lung, liver, skeletal muscle and kidney.

It is found in the cytoplasm. Its subcellular location is the nucleus. The protein localises to the endoplasmic reticulum. The protein resides in the cytoplasmic vesicle. It localises to the autophagosome. It is found in the cell membrane. Its function is as follows. Plays an important role in the regulation of different protein degradation mechanisms and pathways including ubiquitin-proteasome system (UPS), autophagy and endoplasmic reticulum-associated protein degradation (ERAD) pathway. Mediates the proteasomal targeting of misfolded or accumulated proteins for degradation by binding (via UBA domain) to their polyubiquitin chains and by interacting (via ubiquitin-like domain) with the subunits of the proteasome. Plays a role in the ERAD pathway via its interaction with ER-localized proteins UBXN4, VCP and HERPUD1 and may form a link between the polyubiquitinated ERAD substrates and the proteasome. Involved in the regulation of macroautophagy and autophagosome formation; required for maturation of autophagy-related protein LC3 from the cytosolic form LC3-I to the membrane-bound form LC3-II and may assist in the maturation of autophagosomes to autolysosomes by mediating autophagosome-lysosome fusion. Negatively regulates the TICAM1/TRIF-dependent toll-like receptor signaling pathway by decreasing the abundance of TICAM1 via the autophagic pathway. Promotes the ubiquitination and lysosomal degradation of ORAI1, consequently down-regulating the ORAI1-mediated Ca2+ mobilization. Suppresses the maturation and proteasomal degradation of amyloid beta A4 protein (A4) by stimulating the lysine 63 (K63)-linked polyubiquitination. Delays the maturation of A4 by sequestering it in the Golgi apparatus and preventing its transport to the cell surface for subsequent processing. Ubiquitinates BCL2L10 and thereby stabilizes protein abundance. In terms of biological role, plays a role in unfolded protein response (UPR) by attenuating the induction of UPR-inducible genes, DDTI3/CHOP, HSPA5 and PDIA2 during ER stress. Plays a key role in the regulation of the levels of PSEN1 by targeting its accumulation to aggresomes which may then be removed from cells by autophagocytosis. Plays a role in unfolded protein response (UPR) by attenuating the induction of UPR-inducible genes, DDTI3/CHOP, HSPA5 and PDIA2 during ER stress. This Homo sapiens (Human) protein is Ubiquilin-1 (UBQLN1).